We begin with the raw amino-acid sequence, 87 residues long: Small ribosomal subunit protein bS20 (87 aa).

The segment at 1-26 is disordered; the sequence is MANTKSALKRIRQTATRTARNRAVTS. Low complexity predominate over residues 13–23; sequence QTATRTARNRA.

Belongs to the bacterial ribosomal protein bS20 family.

Functionally, binds directly to 16S ribosomal RNA. The protein is Small ribosomal subunit protein bS20 of Akkermansia muciniphila (strain ATCC BAA-835 / DSM 22959 / JCM 33894 / BCRC 81048 / CCUG 64013 / CIP 107961 / Muc).